The chain runs to 153 residues: MGVSLLWALLQDMVLAAIPALGFAMVFNVPVRALRYCALLGAIGHGSRMLMIHFGMNIELASLVASIMIGINWSRWLLAHPKVFTVAAVIPMFPGISAYTAMISVVEISHLGYSEALMSTMVTNFLKASFIVGALSIGLSLPGLWLYRKRPGV.

4 consecutive transmembrane segments (helical) span residues 7–27 (WALLQDMVLAAIPALGFAMVF), 51–71 (MIHFGMNIELASLVASIMIGI), 83–103 (VFTVAAVIPMFPGISAYTAMI), and 125–145 (FLKASFIVGALSIGLSLPGLW).

It belongs to the ThrE exporter (TC 2.A.79) family. In terms of assembly, the transporter is composed of YjjB and YjjP.

The protein localises to the cell inner membrane. In terms of biological role, involved in succinate export with YjjP. Both proteins are required for export. The protein is Probable succinate transporter subunit YjjB of Yersinia pestis bv. Antiqua (strain Antiqua).